The primary structure comprises 525 residues: Peptide chain release factor 3 (525 aa).

Residues 9-276 (AKRRTFAIIS…GFTRYAPAPQ (268 aa)) enclose the tr-type G domain. Residues 18 to 25 (SHPDAGKT), 86 to 90 (DTPGH), and 140 to 143 (NKFD) contribute to the GTP site.

This sequence belongs to the TRAFAC class translation factor GTPase superfamily. Classic translation factor GTPase family. PrfC subfamily.

It localises to the cytoplasm. Functionally, increases the formation of ribosomal termination complexes and stimulates activities of RF-1 and RF-2. It binds guanine nucleotides and has strong preference for UGA stop codons. It may interact directly with the ribosome. The stimulation of RF-1 and RF-2 is significantly reduced by GTP and GDP, but not by GMP. The sequence is that of Peptide chain release factor 3 from Francisella tularensis subsp. novicida (strain U112).